The chain runs to 238 residues: Peroxisomal coenzyme A diphosphatase NUDT7 (238 aa).

Lys-20 bears the N6-succinyllysine mark. The Nudix hydrolase domain occupies 37 to 172 (YNKYSVLLPL…VTRLGHRFIN (136 aa)). The Nudix box motif lies at 77 to 98 (KRDPTDMDDAATALREAQEEVG). Mg(2+) is bound by residues Glu-92 and Glu-96. Residues 236 to 238 (SRL) carry the Microbody targeting signal motif.

It belongs to the Nudix hydrolase family. PCD1 subfamily. Monomer. Requires Mn(2+) as cofactor. It depends on Mg(2+) as a cofactor. As to expression, expressed in liver, kidney, pancreas, pituitary, small intestine, spleen, heart and placenta. Weakly expressed in brain.

It is found in the peroxisome. The catalysed reaction is hexanoyl-CoA + H2O = hexanoyl-4'-phosphopantetheine + adenosine 3',5'-bisphosphate + 2 H(+). It carries out the reaction octanoyl-CoA + H2O = S-octanoyl-4'-phosphopantetheine + adenosine 3',5'-bisphosphate + 2 H(+). It catalyses the reaction butanoyl-CoA + H2O = S-butanoyl-4'-phosphopantetheine + adenosine 3',5'-bisphosphate + 2 H(+). The enzyme catalyses decanoyl-CoA + H2O = decanoyl-4'-phosphopantetheine + adenosine 3',5'-bisphosphate + 2 H(+). The catalysed reaction is dodecanoyl-CoA + H2O = S-dodecanoyl-4'-phosphopantetheine + adenosine 3',5'-bisphosphate + 2 H(+). It carries out the reaction tetradecanoyl-CoA + H2O = tetradecanoyl-4'-phosphopantetheine + adenosine 3',5'-bisphosphate + 2 H(+). It catalyses the reaction choloyl-CoA + H2O = S-choloyl-4'-phosphopantetheine + adenosine 3',5'-bisphosphate + 2 H(+). The enzyme catalyses 3alpha,7alpha,12alpha-trihydroxy-5beta-cholestan-26-oyl-CoA + H2O = 3alpha,7alpha,12alpha-trihydroxy-5beta-cholestan-26-oyl-4'-phosphopantetheine + adenosine 3',5'-bisphosphate + 2 H(+). The catalysed reaction is acetyl-CoA + H2O = S-acetyl-4'-phosphopantetheine + adenosine 3',5'-bisphosphate + 2 H(+). It carries out the reaction CoA + H2O = (R)-4'-phosphopantetheine + adenosine 3',5'-bisphosphate + 2 H(+). It catalyses the reaction propanoyl-CoA + H2O = propanoyl-4'-phosphopantetheine + adenosine 3',5'-bisphosphate + 2 H(+). The enzyme catalyses malonyl-CoA + H2O = malonyl-4'-phosphopantetheine + adenosine 3',5'-bisphosphate + 2 H(+). The catalysed reaction is succinyl-CoA + H2O = succinyl-4'-phosphopantetheine + adenosine 3',5'-bisphosphate + 2 H(+). It carries out the reaction a 5'-end CoA-ribonucleoside in mRNA + H2O = a 5'-end phospho-adenosine-phospho-ribonucleoside in mRNA + (R)-4'-phosphopantetheine + 2 H(+). Its activity is regulated as follows. Inhibited by fluoride. In terms of biological role, fatty acyl-coenzyme A (CoA) diphosphatase that hydrolyzes fatty acyl-CoA to yield acyl-4'-phosphopantetheine and adenosine 3',5'-bisphosphate. Cleaves CoA, CoA esters and oxidized CoA with similar efficiencies. Preferentially hydrolyzes medium-chain acyl-CoAs and bile acid-CoAs. Has no activity toward NDP-sugars, CDP-alcohols, (deoxy)nucleoside 5'-triphosphates, nucleoside 5'-di or monophosphates, diadenosine polyphosphates, NAD, NADH, NADP, NADPH or thymidine-5'-monophospho-p-nitrophenyl ester. May be required to eliminate oxidized CoA from peroxisomes, or regulate CoA and acyl-CoA levels in this organelle in response to metabolic demand. Does not play a role in U8 snoRNA decapping activity. Binds U8 snoRNA. Exhibits decapping activity towards dpCoA-capped RNAs in vitro. The polypeptide is Peroxisomal coenzyme A diphosphatase NUDT7 (Homo sapiens (Human)).